Reading from the N-terminus, the 94-residue chain is MFKVNEYFDGTVKSIAFEGQEGPATVGVMAPGEYEFGTAKREIMHVVSGALTVKLPGSDNWEKFAAGSQFNVPADSKFQLKVAVDTAYLCEYRD.

The protein belongs to the nucleoside phosphorylase PpnP family.

The enzyme catalyses a purine D-ribonucleoside + phosphate = a purine nucleobase + alpha-D-ribose 1-phosphate. It carries out the reaction adenosine + phosphate = alpha-D-ribose 1-phosphate + adenine. It catalyses the reaction cytidine + phosphate = cytosine + alpha-D-ribose 1-phosphate. The catalysed reaction is guanosine + phosphate = alpha-D-ribose 1-phosphate + guanine. The enzyme catalyses inosine + phosphate = alpha-D-ribose 1-phosphate + hypoxanthine. It carries out the reaction thymidine + phosphate = 2-deoxy-alpha-D-ribose 1-phosphate + thymine. It catalyses the reaction uridine + phosphate = alpha-D-ribose 1-phosphate + uracil. The catalysed reaction is xanthosine + phosphate = alpha-D-ribose 1-phosphate + xanthine. Catalyzes the phosphorolysis of diverse nucleosides, yielding D-ribose 1-phosphate and the respective free bases. Can use uridine, adenosine, guanosine, cytidine, thymidine, inosine and xanthosine as substrates. Also catalyzes the reverse reactions. This is Pyrimidine/purine nucleoside phosphorylase from Pseudomonas entomophila (strain L48).